A 955-amino-acid polypeptide reads, in one-letter code: UPF0182 protein syc2310_c (955 aa).

9 consecutive transmembrane segments (helical) span residues 12-32 (IAAI…TLWF), 45-65 (LAVQ…LIGG), 85-105 (LQLG…LALT), 141-161 (GSWP…LFLW), 163-183 (PWPL…LLTS), 224-244 (FDLW…YYLA), 263-283 (HLVR…WLAQ), 306-326 (LPLL…LFWQ), and 343-363 (AAIA…QLVV).

The protein belongs to the UPF0182 family.

It localises to the cell membrane. The polypeptide is UPF0182 protein syc2310_c (Synechococcus sp. (strain ATCC 27144 / PCC 6301 / SAUG 1402/1) (Anacystis nidulans)).